Reading from the N-terminus, the 198-residue chain is uncharacterized protein (198 aa).

2 disordered regions span residues 15-69 (RLGQ…KDTR) and 172-198 (FSVK…LWGL). Composition is skewed to basic and acidic residues over residues 37-49 (HKSF…DQSR) and 56-69 (FNEK…KDTR). A compositionally biased stretch (low complexity) spans 176 to 186 (ESSNLSNNDSD). A compositionally biased stretch (acidic residues) spans 187 to 198 (ASLDEDTLLWGL).

The protein resides in the nucleus. This is an uncharacterized protein from Schizosaccharomyces pombe (strain 972 / ATCC 24843) (Fission yeast).